The sequence spans 197 residues: Adenylylsulfatase HINT3 (197 aa).

Positions 14–43 (NPPGPNPTRDPTLRVSDCSSGSSGDGKVES) are disordered. Positions 51 to 158 (VFCKIIRGES…IPRKERDCLW (108 aa)) constitute an HIT domain. A Histidine triad motif motif is present at residues 143-147 (HTHIH). The active-site Tele-AMP-histidine intermediate is His-145. His-147 lines the substrate pocket.

It is found in the peroxisome. It catalyses the reaction adenosine 5'-phosphosulfate + H2O = sulfate + AMP + 2 H(+). Functionally, possesses adenylylsulfatase activity in vitro. The sequence is that of Adenylylsulfatase HINT3 from Arabidopsis thaliana (Mouse-ear cress).